Here is a 471-residue protein sequence, read N- to C-terminus: Cysteine--tRNA ligase (471 aa).

C29 is a binding site for Zn(2+). The 'HIGH' region signature appears at 31–41 (PTVYNYIHIGN). Zn(2+)-binding residues include C209, H234, and E238. A 'KMSKS' region motif is present at residues 266 to 270 (KMSKS). Position 269 (K269) interacts with ATP.

This sequence belongs to the class-I aminoacyl-tRNA synthetase family. Monomer. The cofactor is Zn(2+).

The protein localises to the cytoplasm. It catalyses the reaction tRNA(Cys) + L-cysteine + ATP = L-cysteinyl-tRNA(Cys) + AMP + diphosphate. In Listeria monocytogenes serotype 4b (strain CLIP80459), this protein is Cysteine--tRNA ligase.